The primary structure comprises 60 residues: Conotoxin Pu5.6 (60 aa).

Positions 1–19 (MRCVPVFVILLLLIASAAS) are cleaved as a signal peptide. A propeptide spanning residues 20-47 (IDAQQKTKDDAPLTSLNDNALQQHWNKR) is cleaved from the precursor.

This sequence belongs to the conotoxin T superfamily. Contains 2 disulfide bonds that can be either 'C1-C3, C2-C4' or 'C1-C4, C2-C3', since these disulfide connectivities have been observed for conotoxins with cysteine framework V (for examples, see AC P0DQQ7 and AC P81755). Expressed by the venom duct.

The protein localises to the secreted. The protein is Conotoxin Pu5.6 of Conus pulicarius (Flea-bitten cone).